The chain runs to 56 residues: Potassium channel toxin alpha-KTx 9.1 (56 aa).

The N-terminal stretch at 1-28 is a signal peptide; the sequence is MSRLFTLVLIVLAMNVMMAIISDPVVEA. 3 cysteine pairs are disulfide-bonded: Cys31-Cys47, Cys34-Cys52, and Cys38-Cys54.

In terms of tissue distribution, expressed by the venom gland.

It localises to the secreted. Blocks small conductance calcium-activated potassium channels (KCNN, SK). Weakly inhibits the Kv7.1/KCNQ1 channel (10 uM of the toxin inhibits currents by 23.3%). Low toxicity by intracerebroventricular injection into mice. This Olivierus martensii (Manchurian scorpion) protein is Potassium channel toxin alpha-KTx 9.1.